A 261-amino-acid chain; its full sequence is MNKDEEFLEEHHYKDDDAIEGEEEQGEEEESDLDDDMYNIDGETNDDDDDDEAEDEESSEDEKQNQKFLYKKKRNLTKSSSNGEFKIIPYSTLKGNTPTKGILKNKSQPPPKKNRIVWDEENLTINDMNKSSTMKIDEPKTPYHYYESEEETDESKKYLENKFLELQNALDKQQEKSEWDSDNDEQQQEKEKEKDKKKKKKNLKIHMRSDSDDNDDNEDEDEDETEEKKENKKKFDNLRKAHYNEFKVVRDLNANLSDDEQ.

Residues Met1 to Asp16 are compositionally biased toward basic and acidic residues. Residues Met1–Glu150 are required for binding to pppB. The segment at Met1 to Gln261 is disordered. The segment covering Asp17–Glu60 has biased composition (acidic residues). The segment covering Leu123–Met134 has biased composition (polar residues). A coiled-coil region spans residues Glu150 to His242. Residues Glu154–Phe163 show a composition bias toward basic and acidic residues. The span at Asp195–His206 shows a compositional bias: basic residues. The segment covering Asp212 to Thr225 has biased composition (acidic residues). Residues Glu226 to Arg250 show a composition bias toward basic and acidic residues.

This sequence belongs to the protein phosphatase inhibitor 2 family. Interacts with pppB.

Functionally, inhibitor of protein-phosphatase 1 (PP1). The polypeptide is Protein phosphatase inhibitor 2 (dpiA) (Dictyostelium discoideum (Social amoeba)).